Here is an 802-residue protein sequence, read N- to C-terminus: Elongation factor G, mitochondrial (802 aa).

A mitochondrion-targeting transit peptide spans 1 to 24 (MRCPSLARLPNRALSGLTRSPVRL). The tr-type G domain maps to 100 to 387 (SRLRNIGIAA…GVIDYLPNPS (288 aa)). GTP-binding positions include 109–116 (AHIDSGKT), 185–189 (DTPGH), and 239–242 (NKMD).

It belongs to the TRAFAC class translation factor GTPase superfamily. Classic translation factor GTPase family. EF-G/EF-2 subfamily.

Its subcellular location is the mitochondrion. It functions in the pathway protein biosynthesis; polypeptide chain elongation. Its function is as follows. Mitochondrial GTPase that catalyzes the GTP-dependent ribosomal translocation step during translation elongation. During this step, the ribosome changes from the pre-translocational (PRE) to the post-translocational (POST) state as the newly formed A-site-bound peptidyl-tRNA and P-site-bound deacylated tRNA move to the P and E sites, respectively. Catalyzes the coordinated movement of the two tRNA molecules, the mRNA and conformational changes in the ribosome. The polypeptide is Elongation factor G, mitochondrial (mef1) (Aspergillus fumigatus (strain CBS 144.89 / FGSC A1163 / CEA10) (Neosartorya fumigata)).